A 393-amino-acid chain; its full sequence is Putative odorant receptor 69a, isoform A (393 aa).

Residues 1-39 are Cytoplasmic-facing; it reads MQLHDHMKYIDLGCKMACIPRYQWKGRPTERQFYASEQR. A helical membrane pass occupies residues 40–60; sequence IVFLLGTICQIFQITGVLIYW. Residues 61–76 lie on the Extracellular side of the membrane; sequence YCNGRLATETGTFVAQ. Residues 77 to 97 traverse the membrane as a helical segment; that stretch reads LSEMCSSFCLTFVGFCNVYAI. Over 98–139 the chain is Cytoplasmic; that stretch reads STNRNQIETLLEELHQIYPRYRKNHYRCQHYFDMAMTIMRIE. The chain crosses the membrane as a helical span at residues 140–160; sequence FLFYMILYVYYNSAPLWVLLW. Over 161–189 the chain is Extracellular; it reads EHLHEEYDLSFKTQTNTWFPWKVHGSALG. A helical membrane pass occupies residues 190–210; the sequence is FGMAVLSITVGSFVGVGFSIV. At 211–269 the chain is on the cytoplasmic side; sequence TQNLICLLTFQLKLHYDGISSQLVSLDCRRPGAHKELSILIAHHSRILQLGDQVNDIMN. Residues 270–290 traverse the membrane as a helical segment; that stretch reads FVFGSSLVGATIAICMSSVSI. The Extracellular portion of the chain corresponds to 291 to 304; it reads MLLDLASAFKYASG. The chain crosses the membrane as a helical span at residues 305-325; that stretch reads LVAFVLYNFVICYMGTEVTLA. The Cytoplasmic portion of the chain corresponds to 326 to 365; that stretch reads SGKVLPAAFYNNWYEGDLVYRRMLLILMMRATKPYMWKTY. A helical transmembrane segment spans residues 366-386; sequence KLAPVSITTYMATLKFSYQMF. The Extracellular segment spans residues 387-393; it reads TCVRSLK.

Belongs to the insect chemoreceptor superfamily. Heteromeric odorant receptor channel (TC 1.A.69) family. Or49a subfamily. In terms of assembly, interacts with Orco. Complexes exist early in the endomembrane system in olfactory sensory neurons (OSNs), coupling these complexes to the conserved ciliary trafficking pathway. Expressed in olfactory sensory neurons in the antenna.

The protein resides in the cell membrane. In terms of biological role, odorant receptor which mediates acceptance or avoidance behavior, depending on its substrates. The odorant receptor repertoire encodes a large collection of odor stimuli that vary widely in identity, intensity, and duration. May form a complex with Orco to form odorant-sensing units, providing sensitive and prolonged odorant signaling and calcium permeability. This is Putative odorant receptor 69a, isoform A (Or69a) from Drosophila melanogaster (Fruit fly).